The chain runs to 121 residues: MSRVKGGTVTHARHKKVLKAAKGYYGRRKSSFKVATQAVDKANQYATRDRKARKRNFRALWIQRINAAVRSHDEALTYSRFINGLNLAGIEVDRKVLADLAVHEPEAFGAIVAQAQAALAA.

It belongs to the bacterial ribosomal protein bL20 family.

In terms of biological role, binds directly to 23S ribosomal RNA and is necessary for the in vitro assembly process of the 50S ribosomal subunit. It is not involved in the protein synthesizing functions of that subunit. This is Large ribosomal subunit protein bL20 from Ruegeria pomeroyi (strain ATCC 700808 / DSM 15171 / DSS-3) (Silicibacter pomeroyi).